The primary structure comprises 481 residues: 6-phosphogluconate dehydrogenase, decarboxylating (481 aa).

Residues 11–16 (GLAVMG), 34–36 (NRT), 76–78 (VKA), and N104 each bind NADP(+). Residues N104 and 130 to 132 (SGG) contribute to the substrate site. The Proton acceptor role is filled by K184. 187–188 (HN) lines the substrate pocket. The Proton donor role is filled by E191. The substrate site is built by Y192, K259, R286, R445, and H451.

It belongs to the 6-phosphogluconate dehydrogenase family. As to quaternary structure, homodimer.

The enzyme catalyses 6-phospho-D-gluconate + NADP(+) = D-ribulose 5-phosphate + CO2 + NADPH. Its pathway is carbohydrate degradation; pentose phosphate pathway; D-ribulose 5-phosphate from D-glucose 6-phosphate (oxidative stage): step 3/3. Functionally, catalyzes the oxidative decarboxylation of 6-phosphogluconate to ribulose 5-phosphate and CO(2), with concomitant reduction of NADP to NADPH. The polypeptide is 6-phosphogluconate dehydrogenase, decarboxylating (Pgd) (Ceratitis capitata (Mediterranean fruit fly)).